The primary structure comprises 130 residues: MPKTVVIPPGTGKPLAPYVPGTLADGVLYVSGTLPLDAEANVVHEGDAGAQTRHVLETIKGVVEAAGGSMDDVTFNHIFLKDWADYGAINAVYATYFPGEKPARYCIQCGLVKPTALVEIASVAHIGKPA.

The protein belongs to the RutC family.

The enzyme catalyses (Z)-3-aminoacrylate + H2O + H(+) = 3-oxopropanoate + NH4(+). Involved in pyrimidine catabolism. Catalyzes the deamination of 3-aminoacrylate to malonic semialdehyde, a reaction that can also occur spontaneously. RutC may facilitate the reaction and modulate the metabolic fitness, rather than catalyzing essential functions. The sequence is that of 3-aminoacrylate deaminase RutC from Methylorubrum extorquens (strain CM4 / NCIMB 13688) (Methylobacterium extorquens).